Here is a 288-residue protein sequence, read N- to C-terminus: 33 kDa chaperonin (288 aa).

Disulfide bonds link Cys233-Cys235 and Cys267-Cys270.

This sequence belongs to the HSP33 family. In terms of processing, under oxidizing conditions two disulfide bonds are formed involving the reactive cysteines. Under reducing conditions zinc is bound to the reactive cysteines and the protein is inactive.

Its subcellular location is the cytoplasm. In terms of biological role, redox regulated molecular chaperone. Protects both thermally unfolding and oxidatively damaged proteins from irreversible aggregation. Plays an important role in the bacterial defense system toward oxidative stress. In Actinobacillus succinogenes (strain ATCC 55618 / DSM 22257 / CCUG 43843 / 130Z), this protein is 33 kDa chaperonin.